The following is a 346-amino-acid chain: Coproporphyrin III ferrochelatase (346 aa).

2 residues coordinate Fe-coproporphyrin III: Ser52 and Tyr121. Positions 181 and 264 each coordinate Fe(2+).

Belongs to the ferrochelatase family.

Its subcellular location is the cytoplasm. It catalyses the reaction Fe-coproporphyrin III + 2 H(+) = coproporphyrin III + Fe(2+). The protein operates within porphyrin-containing compound metabolism; protoheme biosynthesis. Its function is as follows. Involved in coproporphyrin-dependent heme b biosynthesis. Catalyzes the insertion of ferrous iron into coproporphyrin III to form Fe-coproporphyrin III. The protein is Coproporphyrin III ferrochelatase of Mycobacterium sp. (strain JLS).